Here is a 321-residue protein sequence, read N- to C-terminus: Glycolipid transfer protein domain-containing protein 2 (321 aa).

The protein belongs to the GLTP family.

This chain is Glycolipid transfer protein domain-containing protein 2 (Gltpd2), found in Mus musculus (Mouse).